The chain runs to 414 residues: MTIKTLALQCRDAAHVLSQLSSSAKQALLEAMAAALEHDGAVILAANARDLEAAREKGVGTAMLDRLALDTKRLDGIAAALREVAQLPDPVGQITREDVRPNGIVVQKVRVPLGVIAMIYEARPNVTADAAALCIKAGNGVILRGGSEAIHSNTAIARALQSALREANVPEAALTLVEDLRRETMLELLQLSDIVDLAIPRGGEGLIRFVAEHARVPVIKHYKGVCHLFVDASADVDLAVRLLVDGKASRPSACNSLETLLVHADIAERFLPAAAHALRERHVELRGDAATRALLPDIAAASDEDYAAEFLDLILAIRVVPDLDTALTHIRQYGSDHTEVIATQDTANAEQFVQSLRSAVVMVNASSRFSDGGELGLGAEIGISTTRLHSYGPMGLEALTVERFVVRGEGQVRH.

This sequence belongs to the gamma-glutamyl phosphate reductase family.

It localises to the cytoplasm. It carries out the reaction L-glutamate 5-semialdehyde + phosphate + NADP(+) = L-glutamyl 5-phosphate + NADPH + H(+). It participates in amino-acid biosynthesis; L-proline biosynthesis; L-glutamate 5-semialdehyde from L-glutamate: step 2/2. Its function is as follows. Catalyzes the NADPH-dependent reduction of L-glutamate 5-phosphate into L-glutamate 5-semialdehyde and phosphate. The product spontaneously undergoes cyclization to form 1-pyrroline-5-carboxylate. The polypeptide is Gamma-glutamyl phosphate reductase (Xanthomonas campestris pv. campestris (strain B100)).